The following is a 499-amino-acid chain: Endoglucanase (499 aa).

Positions 1–29 (MKRSISIFITCLLITLLTMGGMIASPASA) are cleaved as a signal peptide. Residues H65, 69 to 70 (WY), Y96, and H131 each bind substrate. The active-site Proton donor is E169. Y231 contributes to the substrate binding site. E257 serves as the catalytic Nucleophile. Substrate contacts are provided by residues 263–264 (AS), W291, and 296–298 (KQE). Residues 350 to 499 (QENGISVQYR…GKLIWGTEPN (150 aa)) form the CBM3 domain.

It belongs to the glycosyl hydrolase 5 (cellulase A) family.

The catalysed reaction is Endohydrolysis of (1-&gt;4)-beta-D-glucosidic linkages in cellulose, lichenin and cereal beta-D-glucans.. In Bacillus subtilis (strain 168), this protein is Endoglucanase (eglS).